We begin with the raw amino-acid sequence, 284 residues long: Cell division protein DivIB (284 aa).

A compositionally biased stretch (basic and acidic residues) spans 1–10 (MAWLRKKEQQ). Positions 1-38 (MAWLRKKEQQSDPLTPWQQYQARQQQTPRHDRRQKPKL) are disordered. At 1–56 (MAWLRKKEQQSDPLTPWQQYQARQQQTPRHDRRQKPKLDVNLPKIQTLRRRKLVKN) the chain is on the cytoplasmic side. Residues 57-77 (LVLILLPLLLLLGVFGYFASP) form a helical membrane-spanning segment. Residues 78 to 284 (LSKVGLVSVQ…YSSSEKSSND (207 aa)) are Extracellular-facing. A POTRA domain is found at 79–150 (SKVGLVSVQG…NRIIIKTSEY (72 aa)).

It belongs to the FtsQ/DivIB family. DivIB subfamily.

Its subcellular location is the cell membrane. Its function is as follows. Cell division protein that may be involved in stabilizing or promoting the assembly of the division complex. This chain is Cell division protein DivIB, found in Lacticaseibacillus rhamnosus (strain ATCC 53103 / LMG 18243 / GG) (Lactobacillus rhamnosus).